A 98-amino-acid polypeptide reads, in one-letter code: PqqA binding protein (98 aa).

Belongs to the PqqD family. As to quaternary structure, monomer. Interacts with PqqE.

It participates in cofactor biosynthesis; pyrroloquinoline quinone biosynthesis. Its function is as follows. Functions as a PqqA binding protein and presents PqqA to PqqE, in the pyrroloquinoline quinone (PQQ) biosynthetic pathway. This chain is PqqA binding protein, found in Pseudomonas syringae pv. tomato (strain ATCC BAA-871 / DC3000).